The chain runs to 135 residues: UPF0102 protein Mkms_2031 (135 aa).

Belongs to the UPF0102 family.

This Mycobacterium sp. (strain KMS) protein is UPF0102 protein Mkms_2031.